The sequence spans 161 residues: Calcium-binding protein CML24 (161 aa).

4 EF-hand domains span residues 13–48, 49–84, 90–125, and 126–161; these read GSMDDIKKVFQRFDKNGDGKISVDELKEVIRALSPT, ASPEETVTMMKQFDLDGNGFIDLDEFVALFQIGIGG, NDVSDLKEAFELYDLDGNGRISAKELHSVMKNLGEK, and CSVQDCKKMISKVDIDGDGCVNFDEFKKMMSNGGGA. The Ca(2+) site is built by aspartate 26, asparagine 28, aspartate 30, lysine 32, glutamate 37, aspartate 62, aspartate 64, asparagine 66, glutamate 73, aspartate 103, aspartate 105, asparagine 107, arginine 109, glutamate 114, aspartate 139, aspartate 141, aspartate 143, cysteine 145, and glutamate 150.

As to expression, expressed in seed coat, seedling radical, cotyledons, hypocotyl, shoot apex and elongating root. Expressed in the vasculature of cotyledons, leaves and roots. Highly expressed in guard cells, trichomes and hydathodes. Expressed in inflorescence stem branch points, silique abscission zone, young and mature styles and stigmatic papillae, mature anthers and developing seed.

Its function is as follows. Calcium-binding protein that may positively regulate abscisic acid (ABA) inhibition of germination and seedling development. May be required for photoperiod-induced flowering and function in ion homeostasis. This Arabidopsis thaliana (Mouse-ear cress) protein is Calcium-binding protein CML24 (CML24).